The sequence spans 427 residues: MLNPYLLRNQIDAISKKLLKKKFKLDISLISSLEKKRKKLQIKTDNLQYKHNTLSALFKKEKKIQELDENLKRTLTKSSKNLSELKIELNLLQEKIHNFSLSIPNIPSDDVPEGNSSENNKIVKYWGKKREYSFAVRDHVEIGNKLNQLDWKSSAKISGARFIVMKGNIALLHRALSQFMLDLHTIKHGYTETYVPYLVNHDSLYGTGQLPKFTDDLFHINSIDKKKYVLIPTAEVPLTNLFSNQILNETELPIMLTAHTPCFRSEASSYGRDSKGLIRLHQFDKVELVQIIQPELSMNALELLTHHAEKVLQLLELPYRKVLLCGGEMGFSATKTYDLEVWFPSQKKYREISSCSNMSDFQARRMKTRYKKKKEKSNSFVHTLNGSGLAIGRTLAAILENYQDSDGRVTIPKILQKKYMQGIEYIN.

Residue 233–235 participates in L-serine binding; sequence TAE. 264-266 is a binding site for ATP; it reads RSE. E287 serves as a coordination point for L-serine. Residue 351–354 participates in ATP binding; sequence EISS. S387 lines the L-serine pocket.

Belongs to the class-II aminoacyl-tRNA synthetase family. Type-1 seryl-tRNA synthetase subfamily. In terms of assembly, homodimer. The tRNA molecule binds across the dimer.

The protein resides in the cytoplasm. It carries out the reaction tRNA(Ser) + L-serine + ATP = L-seryl-tRNA(Ser) + AMP + diphosphate + H(+). The catalysed reaction is tRNA(Sec) + L-serine + ATP = L-seryl-tRNA(Sec) + AMP + diphosphate + H(+). The protein operates within aminoacyl-tRNA biosynthesis; selenocysteinyl-tRNA(Sec) biosynthesis; L-seryl-tRNA(Sec) from L-serine and tRNA(Sec): step 1/1. In terms of biological role, catalyzes the attachment of serine to tRNA(Ser). Is also able to aminoacylate tRNA(Sec) with serine, to form the misacylated tRNA L-seryl-tRNA(Sec), which will be further converted into selenocysteinyl-tRNA(Sec). The sequence is that of Serine--tRNA ligase from Buchnera aphidicola subsp. Schizaphis graminum (strain Sg).